Reading from the N-terminus, the 222-residue chain is Protein GrpE (222 aa).

The segment at 1-64 is disordered; sequence MSDQNLGQGS…GEEILSDDDL (64 aa). Positions 16 to 44 are enriched in basic and acidic residues; the sequence is EEPIVRDKRRIDPETGKVREPQDLSHEEL. Residues 54 to 64 are compositionally biased toward acidic residues; sequence QGEEILSDDDL.

This sequence belongs to the GrpE family. Homodimer.

It localises to the cytoplasm. Its function is as follows. Participates actively in the response to hyperosmotic and heat shock by preventing the aggregation of stress-denatured proteins, in association with DnaK and GrpE. It is the nucleotide exchange factor for DnaK and may function as a thermosensor. Unfolded proteins bind initially to DnaJ; upon interaction with the DnaJ-bound protein, DnaK hydrolyzes its bound ATP, resulting in the formation of a stable complex. GrpE releases ADP from DnaK; ATP binding to DnaK triggers the release of the substrate protein, thus completing the reaction cycle. Several rounds of ATP-dependent interactions between DnaJ, DnaK and GrpE are required for fully efficient folding. This Leifsonia xyli subsp. xyli (strain CTCB07) protein is Protein GrpE.